The chain runs to 325 residues: Acetyl-coenzyme A carboxylase carboxyl transferase subunit alpha (325 aa).

A CoA carboxyltransferase C-terminal domain is found at Lys38–Gln292.

It belongs to the AccA family. In terms of assembly, acetyl-CoA carboxylase is a heterohexamer composed of biotin carboxyl carrier protein (AccB), biotin carboxylase (AccC) and two subunits each of ACCase subunit alpha (AccA) and ACCase subunit beta (AccD).

It is found in the cytoplasm. It carries out the reaction N(6)-carboxybiotinyl-L-lysyl-[protein] + acetyl-CoA = N(6)-biotinyl-L-lysyl-[protein] + malonyl-CoA. The protein operates within lipid metabolism; malonyl-CoA biosynthesis; malonyl-CoA from acetyl-CoA: step 1/1. In terms of biological role, component of the acetyl coenzyme A carboxylase (ACC) complex. First, biotin carboxylase catalyzes the carboxylation of biotin on its carrier protein (BCCP) and then the CO(2) group is transferred by the carboxyltransferase to acetyl-CoA to form malonyl-CoA. This Halalkalibacterium halodurans (strain ATCC BAA-125 / DSM 18197 / FERM 7344 / JCM 9153 / C-125) (Bacillus halodurans) protein is Acetyl-coenzyme A carboxylase carboxyl transferase subunit alpha.